The chain runs to 104 residues: Protein MHF2 homolog (104 aa).

Belongs to the CENP-X/MHF2 family.

It is found in the nucleus. Acts in the same pathway as FANCM to restrain class II meiotic crossing over (CO), and acts with FANCM during meiosis to repair interstrand cross-links (ICLs). The protein is Protein MHF2 homolog of Arabidopsis thaliana (Mouse-ear cress).